A 545-amino-acid polypeptide reads, in one-letter code: Probable target of rapamycin complex 2 subunit BIT2 (545 aa).

2 disordered regions span residues 1–24 and 78–166; these read MATDLNRKRSATSGSLSVTNPNIK and DGSN…GTSS. Polar residues-rich tracts occupy residues 11 to 24, 106 to 130, and 151 to 166; these read ATSGSLSVTNPNIK, IGSSSSNRMEGNTTSNDSLFSSNSR, and RSGSKNYGTVITGTSS.

As to quaternary structure, interacts with the target of rapamycin complex 2 (TORC2) subunit TSC11 and the TORC2 effectors SLM1 and SLM2.

The sequence is that of Probable target of rapamycin complex 2 subunit BIT2 (BIT2) from Saccharomyces cerevisiae (strain ATCC 204508 / S288c) (Baker's yeast).